The following is a 271-amino-acid chain: Mannosyl-3-phosphoglycerate phosphatase (271 aa).

The active-site Nucleophile is the aspartate 13. Mg(2+) is bound by residues aspartate 13, aspartate 15, and aspartate 214.

Belongs to the HAD-like hydrolase superfamily. MPGP family. Requires Mg(2+) as cofactor.

The protein localises to the cytoplasm. It catalyses the reaction 2-O-(alpha-D-mannosyl)-3-phosphoglycerate + H2O = (2R)-2-O-(alpha-D-mannosyl)-glycerate + phosphate. The polypeptide is Mannosyl-3-phosphoglycerate phosphatase (Escherichia coli O127:H6 (strain E2348/69 / EPEC)).